The following is a 135-amino-acid chain: MLSPKRTRFRKQHRGRMKGISYRGNRICFGGYALQALEPAWITSRQIEAGRRAMTRYARRGGKIWVRIFPDKPVTVRPAETRMGSGKGSPEFWVFVVKPGRILYEMGGVSEIVAREAISIAASKMPIRTQFIIAG.

Belongs to the universal ribosomal protein uL16 family. In terms of assembly, part of the 50S ribosomal subunit.

The protein localises to the plastid. Its subcellular location is the chloroplast. The polypeptide is Large ribosomal subunit protein uL16c (Ranunculus macranthus (Large buttercup)).